Consider the following 461-residue polypeptide: Elongation factor 1-alpha (461 aa).

Glycine 2 bears the N,N,N-trimethylglycine mark. Lysine 3 is modified (N6,N6-dimethyllysine; alternate). The residue at position 3 (lysine 3) is an N6-methyllysine; alternate. Positions 6 to 241 (KTHINVVVIG…DSIEPPKRPT (236 aa)) constitute a tr-type G domain. The segment at 15–22 (GHVDSGKS) is G1. 15–22 (GHVDSGKS) serves as a coordination point for GTP. Residue lysine 31 is modified to N6-methyllysine. Residues 71–75 (GITID) form a G2 region. An N6,N6,N6-trimethyllysine modification is found at lysine 80. Positions 92 to 95 (DAPG) are G3. Residues 92–96 (DAPGH) and 154–157 (NKMD) contribute to the GTP site. A G4 region spans residues 154 to 157 (NKMD). The G5 stretch occupies residues 193–195 (SGF). Lysine 317 bears the N6,N6-dimethyllysine; alternate mark. Residue lysine 317 is modified to N6-methyllysine; alternate. Lysine 391 bears the N6-methyllysine mark.

Belongs to the TRAFAC class translation factor GTPase superfamily. Classic translation factor GTPase family. EF-Tu/EF-1A subfamily.

It is found in the cytoplasm. In terms of biological role, this protein promotes the GTP-dependent binding of aminoacyl-tRNA to the A-site of ribosomes during protein biosynthesis. The polypeptide is Elongation factor 1-alpha (TEF) (Pseudoechria curvicolla (Podospora curvicolla)).